The primary structure comprises 29 residues: Dander allergen Equ c 2.0101 (29 aa).

This sequence belongs to the calycin superfamily. Lipocalin family.

It is found in the secreted. The polypeptide is Dander allergen Equ c 2.0101 (Equus caballus (Horse)).